A 199-amino-acid chain; its full sequence is Peroxiredoxin-1 (199 aa).

N-acetylserine is present on Ser-2. A Thioredoxin domain is found at 6 to 165; it reads AKIGHPAPNF…TLRLVQAFQF (160 aa). Lys-7 carries the N6-acetyllysine; alternate modification. Lys-7 participates in a covalent cross-link: Glycyl lysine isopeptide (Lys-Gly) (interchain with G-Cter in SUMO2); alternate. N6-acetyllysine is present on residues Lys-16 and Lys-27. Phosphoserine is present on Ser-32. Residue Lys-35 is modified to N6-acetyllysine; alternate. Lys-35 is modified (N6-succinyllysine; alternate). The Cysteine sulfenic acid (-SOH) intermediate role is filled by Cys-52. Phosphothreonine; by CDK1 is present on Thr-90. A Glycyl lysine isopeptide (Lys-Gly) (interchain with G-Cter in SUMO2) cross-link involves residue Lys-120. Position 136 is an N6-acetyllysine (Lys-136). The segment at 176-199 is disordered; it reads GWKPGSDTIKPDVQKSKEYFSKQK. Positions 184–199 are enriched in basic and acidic residues; that stretch reads IKPDVQKSKEYFSKQK. Residue Lys-185 forms a Glycyl lysine isopeptide (Lys-Gly) (interchain with G-Cter in SUMO1) linkage. Lys-197 carries the post-translational modification N6-acetyllysine.

This sequence belongs to the peroxiredoxin family. AhpC/Prx1 subfamily. Homodimer; disulfide-linked, upon oxidation. 5 homodimers assemble to form a ring-like decamer. Interacts with GDPD5; forms a mixed-disulfide with GDPD5. Interacts with SESN1 and SESN2. Interacts with FAM107A. Post-translationally, phosphorylated on Thr-90 during the M-phase, which leads to a more than 80% decrease in enzymatic activity. In terms of processing, acetylation increases reducing activity and resistance to superoxidation. Deacetylated by HDAC6 which decreases reducing activity. The enzyme can be inactivated by further oxidation of the cysteine sulfenic acid (C(P)-SOH) to sulphinic acid (C(P)-SO2H) instead of its condensation to a disulfide bond. It can be reactivated by forming a transient disulfide bond with sulfiredoxin SRXN1, which reduces the cysteine sulfinic acid in an ATP- and Mg-dependent manner.

The protein localises to the cytoplasm. It is found in the melanosome. It catalyses the reaction a hydroperoxide + [thioredoxin]-dithiol = an alcohol + [thioredoxin]-disulfide + H2O. Functionally, thiol-specific peroxidase that catalyzes the reduction of hydrogen peroxide and organic hydroperoxides to water and alcohols, respectively. Plays a role in cell protection against oxidative stress by detoxifying peroxides and as sensor of hydrogen peroxide-mediated signaling events. Might participate in the signaling cascades of growth factors and tumor necrosis factor-alpha by regulating the intracellular concentrations of H(2)O(2). Reduces an intramolecular disulfide bond in GDPD5 that gates the ability to GDPD5 to drive postmitotic motor neuron differentiation. The protein is Peroxiredoxin-1 (PRDX1) of Homo sapiens (Human).